The primary structure comprises 73 residues: Ocellatin-PT6 (73 aa).

A signal peptide spans 1–22 (MAFLKKSLFLVLFLGLVSLSIC). Residues 23–39 (DEEKRQDEDDDDDDDEE) constitute a propeptide that is removed on maturation.

Expressed by the skin glands.

It is found in the secreted. In terms of biological role, has antibacterial activity against Gram-negative bacterium E.coli ATCC 25922 (MIC=120 uM) but not against S.pneumoniae ATCC 700603, S.choleraesuis ATCC 14028 or against Gram-positive bacterium S.aureus ATCC 29313. Shows no hemolytic activity and no cytotoxicity. This chain is Ocellatin-PT6, found in Leptodactylus pustulatus (Ceara white-lipped frog).